Here is a 623-residue protein sequence, read N- to C-terminus: Transcriptional activator of proteases prtT (623 aa).

The zn(2)-C6 fungal-type DNA-binding region spans 50–79 (CHTCRKLKTRCDLDPRGHACRRCLSLRIDC).

This sequence belongs to the prtT family.

It is found in the nucleus. Transcription factor required for protein utilization and degradation. Regulates transcription of major secreted proteases. The polypeptide is Transcriptional activator of proteases prtT (prtT) (Aspergillus niger (strain ATCC MYA-4892 / CBS 513.88 / FGSC A1513)).